The chain runs to 319 residues: MNPNYLDFEQPIADLEAKIQELHTASMGPSINVDTEVRALENKLRLRTAQIFRNLSAWQISQLARHPRRPYTLDYISVVCDEFQELAGDRALADDKAIVGGLARIGHRPVMLIGHQKGRDNKERLMRNFGMPKPEGYRKALRLMKLAERFGLPLLTFIDTMGAWPGIDAEERNQSEAIATNLIEMAELKIPVICTVIGEGGSGGALAIGIGDRTLMLEYSTYSVITPEGCASILWKDAAKASDAAEQLNLTARRLKEFGLIDKVIREPIGGAHRNPQQMANRLKAVLLNELEALDKVPLVTLLNQRHKRLRTYGAYENH.

The CoA carboxyltransferase C-terminal domain maps to 32-293 (NVDTEVRALE…KAVLLNELEA (262 aa)).

It belongs to the AccA family. In terms of assembly, acetyl-CoA carboxylase is a heterohexamer composed of biotin carboxyl carrier protein (AccB), biotin carboxylase (AccC) and two subunits each of ACCase subunit alpha (AccA) and ACCase subunit beta (AccD).

The protein resides in the cytoplasm. The catalysed reaction is N(6)-carboxybiotinyl-L-lysyl-[protein] + acetyl-CoA = N(6)-biotinyl-L-lysyl-[protein] + malonyl-CoA. It functions in the pathway lipid metabolism; malonyl-CoA biosynthesis; malonyl-CoA from acetyl-CoA: step 1/1. Functionally, component of the acetyl coenzyme A carboxylase (ACC) complex. First, biotin carboxylase catalyzes the carboxylation of biotin on its carrier protein (BCCP) and then the CO(2) group is transferred by the carboxyltransferase to acetyl-CoA to form malonyl-CoA. The chain is Acetyl-coenzyme A carboxylase carboxyl transferase subunit alpha from Xylella fastidiosa (strain 9a5c).